The sequence spans 240 residues: Aspartate/glutamate leucyltransferase (240 aa).

The protein belongs to the R-transferase family. Bpt subfamily.

Its subcellular location is the cytoplasm. It catalyses the reaction N-terminal L-glutamyl-[protein] + L-leucyl-tRNA(Leu) = N-terminal L-leucyl-L-glutamyl-[protein] + tRNA(Leu) + H(+). The enzyme catalyses N-terminal L-aspartyl-[protein] + L-leucyl-tRNA(Leu) = N-terminal L-leucyl-L-aspartyl-[protein] + tRNA(Leu) + H(+). Its function is as follows. Functions in the N-end rule pathway of protein degradation where it conjugates Leu from its aminoacyl-tRNA to the N-termini of proteins containing an N-terminal aspartate or glutamate. This Thiobacillus denitrificans (strain ATCC 25259 / T1) protein is Aspartate/glutamate leucyltransferase.